The following is a 1497-amino-acid chain: Dual oxidase 1 (1497 aa).

The first 21 residues, 1–21 (MRSKHVLYIAILFSSIFGGKG), serve as a signal peptide directing secretion. Topologically, residues 22–587 (IQQNEEFQRY…MQSTYWTDND (566 aa)) are extracellular. Residues 26–590 (EEFQRYDGWY…TYWTDNDTTY (565 aa)) form a peroxidase-like; mediates peroxidase activity region. Residues N66, N305, N567, and N586 are each glycosylated (N-linked (GlcNAc...) asparagine). The chain crosses the membrane as a helical span at residues 588 to 608 (TTYVFTLIGLACVPLICYGIG). The Cytoplasmic segment spans residues 609–986 (RYLVNRRIAI…VSAFLETYRQ (378 aa)). EF-hand domains follow at residues 817 to 852 (ANNEFVKRMFAMTAKHNEDSLSFNEFLTVLREFVNA) and 853 to 888 (PQKQKLQTLFKMCDLEGKNKVLRKDLAELVKSLNQT). Residues 987–1007 (HVFIVFCFVAINLVLFFERFW) traverse the membrane as a helical segment. Residues 1008–1024 (HYRYMAENRDLRRVMGA) are Extracellular-facing. Residues 1025–1045 (GIAITRGAAGALSFCMALILL) traverse the membrane as a helical segment. A Ferric oxidoreductase domain is found at 1030–1210 (RGAAGALSFC…FVIDRIIGLM (181 aa)). The Cytoplasmic portion of the chain corresponds to 1046 to 1068 (TVCRNIITLLRETVIAQYIPFDS). The chain crosses the membrane as a helical span at residues 1069–1089 (AIAFHKIVALFAAFWATLHTV). Topologically, residues 1090–1134 (GHCVNFYHVGTQSQEGLACLFQEAFFGSNFLPSISYWFFSTITGL) are extracellular. The chain crosses the membrane as a helical span at residues 1135–1155 (TGIALVAVMCIIYVFALPCFI). Residues 1156-1163 (KRAYHAFR) are Cytoplasmic-facing. The chain crosses the membrane as a helical span at residues 1164–1184 (LTHLLNIAFYALTLLHGLPKL). Topologically, residues 1185–1189 (LDSPK) are extracellular. Residues 1190–1210 (FGYYVVGPIVLFVIDRIIGLM) traverse the membrane as a helical segment. In terms of domain architecture, FAD-binding FR-type spans 1211-1318 (QYYKKLEIVN…KGPYGDGNQE (108 aa)). The Cytoplasmic portion of the chain corresponds to 1211–1497 (QYYKKLEIVN…PSFAHRFETF (287 aa)).

This sequence in the N-terminal section; belongs to the peroxidase family. Interacts with doxa-1 and tsp-15. Interacts with rho-1. Expressed in hypodermal cells.

The protein localises to the membrane. The catalysed reaction is NADH + O2 + H(+) = H2O2 + NAD(+). It carries out the reaction NADPH + O2 + H(+) = H2O2 + NADP(+). Peroxidase activity is inhibited by aminobenzohydrazide. Plays a role in cuticle biogenesis. In complex with doxa-1 and tsp-15, produces reactive oxygen species (ROS), which are probably used by mlt-7 for tyrosine cross-linking, thus stabilizing cuticular extracellular matrix. May regulate the production of ROS by playing a role in modulating proline catabolism. Required in combination with mlt-7 for correct formation of cross-links in cuticle collagens. Association with the GTPase rho-1 promotes ROS production and this interaction may be modulated by memo-1, in order to control the oxidative stress response and longevity. In Caenorhabditis elegans, this protein is Dual oxidase 1.